The following is a 547-amino-acid chain: Glucose-6-phosphate isomerase (547 aa).

The active-site Proton donor is the E351. Catalysis depends on residues H382 and K509.

It belongs to the GPI family.

The protein resides in the cytoplasm. It catalyses the reaction alpha-D-glucose 6-phosphate = beta-D-fructose 6-phosphate. Its pathway is carbohydrate biosynthesis; gluconeogenesis. It functions in the pathway carbohydrate degradation; glycolysis; D-glyceraldehyde 3-phosphate and glycerone phosphate from D-glucose: step 2/4. Functionally, catalyzes the reversible isomerization of glucose-6-phosphate to fructose-6-phosphate. This Coxiella burnetii (strain RSA 493 / Nine Mile phase I) protein is Glucose-6-phosphate isomerase.